The chain runs to 445 residues: Phosphoglucosamine mutase 1 (445 aa).

Residue Ser-102 is the Phosphoserine intermediate of the active site. Mg(2+) is bound by residues Ser-102, Asp-241, Asp-243, and Asp-245. At Ser-102 the chain carries Phosphoserine.

It belongs to the phosphohexose mutase family. Mg(2+) serves as cofactor. Activated by phosphorylation.

It carries out the reaction alpha-D-glucosamine 1-phosphate = D-glucosamine 6-phosphate. Its function is as follows. Catalyzes the conversion of glucosamine-6-phosphate to glucosamine-1-phosphate. This is Phosphoglucosamine mutase 1 from Shewanella amazonensis (strain ATCC BAA-1098 / SB2B).